The sequence spans 232 residues: Sugar fermentation stimulation protein homolog (232 aa).

It belongs to the SfsA family.

The protein is Sugar fermentation stimulation protein homolog of Pyrobaculum arsenaticum (strain DSM 13514 / JCM 11321 / PZ6).